We begin with the raw amino-acid sequence, 213 residues long: Na(+)-translocating NADH-quinone reductase subunit E (213 aa).

6 helical membrane passes run 12-32 (AVFVENLALAFFLGMCTFLAV), 40-60 (IGLGIAVIAIETITVPANQLI), 92-112 (FLGFISYIGVIAAMVQILEMF), 124-144 (LGIFLPLITVNCAILGASLFM), 155-175 (VVFGFGCGVGWALAIMALAGI), and 191-211 (LGITFITVGLMSLAFMSFSGI).

The protein belongs to the NqrDE/RnfAE family. Composed of six subunits; NqrA, NqrB, NqrC, NqrD, NqrE and NqrF.

Its subcellular location is the cell inner membrane. It catalyses the reaction a ubiquinone + n Na(+)(in) + NADH + H(+) = a ubiquinol + n Na(+)(out) + NAD(+). Functionally, NQR complex catalyzes the reduction of ubiquinone-1 to ubiquinol by two successive reactions, coupled with the transport of Na(+) ions from the cytoplasm to the periplasm. NqrA to NqrE are probably involved in the second step, the conversion of ubisemiquinone to ubiquinol. This is Na(+)-translocating NADH-quinone reductase subunit E from Rhodopirellula baltica (strain DSM 10527 / NCIMB 13988 / SH1).